Here is a 113-residue protein sequence, read N- to C-terminus: Large ribosomal subunit protein bL17 (113 aa).

The protein belongs to the bacterial ribosomal protein bL17 family. Part of the 50S ribosomal subunit. Contacts protein L32.

In Clostridium botulinum (strain ATCC 19397 / Type A), this protein is Large ribosomal subunit protein bL17.